The sequence spans 450 residues: MAARRRPRSAVPRRVATLSVHTSPLDQPGAGDAGGMNVYVVEVSRRLAERGIAVDVFTRAVSSDLPPVVEMSPGVTVRHVSAGPFEGLGKEELPAQLCAFTAAVLREEAQHEPGHYDVVHSHYWLSGQVGWLARDRWSVPLIHTAHTLAKVKNAALAVGDRPEPRARVIGEEQVVAEADRLVANTADEARQLVDHYGADPRRTLVVPPGVDLDRFTPGDRTAARRRLGVAEDAVVLLFVGRIQPLKAPDLLLEAAARMLADDPALRDRLQVHVVGAPSGTGLEAPRQLEQLAAGLGIADLLRFLPPVHVELLAEHYRAADVAVVPSHNESFGLVALEAQACGTPVVAAAVGGLRTAVRDGVSGVLVEGRDPADYAAAIRAVLARRELLSAGARRHAGAFSWERTVDSLVAAYTAAAEEMAAASQRAVPGTLLRPAWALGGVRALGAQVAR.

Histidine 21 contacts 1D-myo-inositol 3-phosphate. UDP-N-acetyl-alpha-D-glucosamine-binding positions include 27–28 (QP) and glycine 35. 1D-myo-inositol 3-phosphate contacts are provided by residues 32 to 37 (DAGGMN), lysine 90, tyrosine 123, threonine 147, and arginine 167. Arginine 241, lysine 246, and valine 307 together coordinate UDP-N-acetyl-alpha-D-glucosamine. Residues tyrosine 316, arginine 317, and alanine 319 each coordinate Mg(2+). UDP-N-acetyl-alpha-D-glucosamine is bound by residues glutamate 329 and glutamate 337. Residue threonine 343 coordinates Mg(2+).

It belongs to the glycosyltransferase group 1 family. MshA subfamily. In terms of assembly, homodimer.

The catalysed reaction is 1D-myo-inositol 3-phosphate + UDP-N-acetyl-alpha-D-glucosamine = 1D-myo-inositol 2-acetamido-2-deoxy-alpha-D-glucopyranoside 3-phosphate + UDP + H(+). Functionally, catalyzes the transfer of a N-acetyl-glucosamine moiety to 1D-myo-inositol 3-phosphate to produce 1D-myo-inositol 2-acetamido-2-deoxy-glucopyranoside 3-phosphate in the mycothiol biosynthesis pathway. This Geodermatophilus obscurus (strain ATCC 25078 / DSM 43160 / JCM 3152 / CCUG 61914 / KCC A-0152 / KCTC 9177 / NBRC 13315 / NRRL B-3577 / G-20) protein is D-inositol 3-phosphate glycosyltransferase.